The sequence spans 232 residues: Orotidine 5'-phosphate decarboxylase (232 aa).

Substrate-binding positions include D13, K35, 62-71 (DLKFHDIPNT), T122, R182, Q191, G211, and R212. The active-site Proton donor is the K64.

This sequence belongs to the OMP decarboxylase family. Type 1 subfamily. Homodimer.

The catalysed reaction is orotidine 5'-phosphate + H(+) = UMP + CO2. It participates in pyrimidine metabolism; UMP biosynthesis via de novo pathway; UMP from orotate: step 2/2. Its function is as follows. Catalyzes the decarboxylation of orotidine 5'-monophosphate (OMP) to uridine 5'-monophosphate (UMP). In Pseudomonas savastanoi pv. phaseolicola (strain 1448A / Race 6) (Pseudomonas syringae pv. phaseolicola (strain 1448A / Race 6)), this protein is Orotidine 5'-phosphate decarboxylase.